Reading from the N-terminus, the 98-residue chain is Peptides MS9.1 (98 aa).

The first 21 residues, 1–21, serve as a signal peptide directing secretion; the sequence is MKQSLILAVLCLALVFATIEA. The propeptide occupies 22 to 27; the sequence is KPKADP. 2 cysteine pairs are disulfide-bonded: cysteine 34–cysteine 46 and cysteine 37–cysteine 52. Propeptides lie at residues 63–64 and 92–98; these read DP and DPVRDAE.

The protein belongs to the sea anemone BBH family.

It is found in the secreted. The protein resides in the nematocyst. Functionally, acts as a positive modulator of mammalian TRPA1, a non-selective cation channel involved in detection of pain, in vitro yet has an analgesic and anti-inflammatory effect in vivo. In Metridium senile (Brown sea anemone), this protein is Peptides MS9.1.